The primary structure comprises 735 residues: Cyclic nucleotide-gated channel cone photoreceptor subunit alpha (735 aa).

At 1-214 (MAKINTQHSY…PSSNMYYNWL (214 aa)) the chain is on the cytoplasmic side. A disordered region spans residues 142-191 (VNFSNNTNEDKKEEKKEVKEEKKEEKKEEKKEEKKDDKKDDKKDDKKDDK). Positions 149 to 191 (NEDKKEEKKEVKEEKKEEKKEEKKEEKKDDKKDDKKDDKKDDK) are enriched in basic and acidic residues. Residues 215-236 (TIIAAPVFYNWCMLICRACFDE) form a helical membrane-spanning segment. Residues 237–246 (LQIDHIKLWL) lie on the Extracellular side of the membrane. Residues 247–267 (FLDYCSDIIYVFDMFVRFRTG) traverse the membrane as a helical segment. Residues 268-292 (FLEQGLLVKDEKKLRDHYTQTVQFK) lie on the Cytoplasmic side of the membrane. A helical transmembrane segment spans residues 293–311 (LDVLSLLPTDLAYLKLGLN). Residues 312 to 316 (YPELR) are Extracellular-facing. A helical membrane pass occupies residues 317–335 (FNRLLRIARLFEFFDRTET). Residues 336–342 (RTNYPNM) are Cytoplasmic-facing. A helical membrane pass occupies residues 343–366 (FRIGNLVLYILIIIHWNACIYFAI). At 367–389 (SKVIGFGTDSWVYPNVSIPEYGR) the chain is on the extracellular side. Helical transmembrane passes span 390-424 (LSRK…LFVV) and 425-449 (IDFL…SNMN). Over 450–735 (ASRAEFQAKV…PEKPEEQKKD (286 aa)) the chain is Cytoplasmic. 3',5'-cyclic GMP-binding positions include 532 to 654 (LLIE…DNLI), Glu-591, and Arg-606. The tract at residues 715-735 (GSGSLSVGEPEPEKPEEQKKD) is disordered. Over residues 725–735 (EPEKPEEQKKD) the composition is skewed to basic and acidic residues.

Belongs to the cyclic nucleotide-gated cation channel (TC 1.A.1.5) family.

The protein resides in the membrane. Functionally, visual signal transduction is mediated by a G-protein coupled cascade using cGMP as second messenger. This protein can be activated by cyclic GMP which leads to an opening of the cation channel and thereby causing a depolarization of cone photoreceptors. This is Cyclic nucleotide-gated channel cone photoreceptor subunit alpha from Gallus gallus (Chicken).